The sequence spans 158 residues: MSKVSYYTPEGLKKLRDELNHLKDVERPKASEAIGEARDKGDLSENAEYDAAKEAQGLLEMKISKMEEVVANARVIDESQLDTSKVLVHSHVKIKNQTNGAEMTYKLVAQSEADLKSGKISVDSPIGKGLLGKKVGDTAEIEVPNGTVKFDVIEIWRE.

The span at 24–43 (DVERPKASEAIGEARDKGDL) shows a compositional bias: basic and acidic residues. The disordered stretch occupies residues 24-47 (DVERPKASEAIGEARDKGDLSENA). Residues 48 to 68 (EYDAAKEAQGLLEMKISKMEE) are a coiled coil.

It belongs to the GreA/GreB family.

In terms of biological role, necessary for efficient RNA polymerase transcription elongation past template-encoded arresting sites. The arresting sites in DNA have the property of trapping a certain fraction of elongating RNA polymerases that pass through, resulting in locked ternary complexes. Cleavage of the nascent transcript by cleavage factors such as GreA or GreB allows the resumption of elongation from the new 3'terminus. GreA releases sequences of 2 to 3 nucleotides. The chain is Transcription elongation factor GreA from Christiangramia forsetii (strain DSM 17595 / CGMCC 1.15422 / KT0803) (Gramella forsetii).